Reading from the N-terminus, the 201-residue chain is Ribosome maturation factor RimP (201 aa).

Belongs to the RimP family.

The protein localises to the cytoplasm. In terms of biological role, required for maturation of 30S ribosomal subunits. In Rhizobium leguminosarum bv. trifolii (strain WSM2304), this protein is Ribosome maturation factor RimP.